The primary structure comprises 89 residues: Small ribosomal subunit protein uS14 (89 aa).

The protein belongs to the universal ribosomal protein uS14 family. As to quaternary structure, part of the 30S ribosomal subunit. Contacts proteins S3 and S10.

Functionally, binds 16S rRNA, required for the assembly of 30S particles and may also be responsible for determining the conformation of the 16S rRNA at the A site. This chain is Small ribosomal subunit protein uS14, found in Phytoplasma australiense.